Reading from the N-terminus, the 147-residue chain is Hemoglobin subunit beta-1 (147 aa).

N-acetylvaline is present on Val2. The 145-residue stretch at 3 to 147 (HLTGEEKAAV…VATALAHKYH (145 aa)) folds into the Globin domain. Lys18 bears the N6-succinyllysine mark. Ser45 bears the Phosphoserine mark. Lys60 is subject to N6-succinyllysine. Heme b contacts are provided by His64 and His93. An Asymmetric dimethylarginine modification is found at Arg105. Position 124 is a phosphothreonine (Thr124).

The protein belongs to the globin family. Hb1 is a heterotetramer of two alpha chains and two beta-1 chains. Red blood cells.

Involved in oxygen transport from the lung to the various peripheral tissues. The sequence is that of Hemoglobin subunit beta-1 (HBB1) from Chalinolobus morio (Chocolate-wattled bat).